The sequence spans 454 residues: UDP-N-acetylmuramoylalanine--D-glutamate ligase (454 aa).

118-124 (GTNGKTT) contacts ATP.

Belongs to the MurCDEF family.

It is found in the cytoplasm. The catalysed reaction is UDP-N-acetyl-alpha-D-muramoyl-L-alanine + D-glutamate + ATP = UDP-N-acetyl-alpha-D-muramoyl-L-alanyl-D-glutamate + ADP + phosphate + H(+). Its pathway is cell wall biogenesis; peptidoglycan biosynthesis. In terms of biological role, cell wall formation. Catalyzes the addition of glutamate to the nucleotide precursor UDP-N-acetylmuramoyl-L-alanine (UMA). This is UDP-N-acetylmuramoylalanine--D-glutamate ligase from Thermosynechococcus vestitus (strain NIES-2133 / IAM M-273 / BP-1).